We begin with the raw amino-acid sequence, 236 residues long: EEF1A lysine methyltransferase 2 (236 aa).

Residues methionine 1–alanine 11 show a composition bias toward gly residues. The segment at methionine 1–alanine 31 is disordered. Serine 2 is modified (N-acetylserine). A Phosphoserine modification is found at serine 21.

It belongs to the class I-like SAM-binding methyltransferase superfamily. EFM4 family.

It is found in the cytoplasm. Its subcellular location is the nucleus. It carries out the reaction L-lysyl-[protein] + 3 S-adenosyl-L-methionine = N(6),N(6),N(6)-trimethyl-L-lysyl-[protein] + 3 S-adenosyl-L-homocysteine + 3 H(+). In terms of biological role, protein-lysine methyltransferase that selectively catalyzes the trimethylation of EEF1A at 'Lys-318'. This is EEF1A lysine methyltransferase 2 from Homo sapiens (Human).